The following is a 239-amino-acid chain: Ribose-5-phosphate isomerase A (239 aa).

Residues 40–43, 96–99, and 110–113 each bind substrate; these read SGST, DGAD, and KGGG. Catalysis depends on Glu119, which acts as the Proton acceptor. Substrate is bound at residue Lys137.

This sequence belongs to the ribose 5-phosphate isomerase family. In terms of assembly, homodimer.

It carries out the reaction aldehydo-D-ribose 5-phosphate = D-ribulose 5-phosphate. It participates in carbohydrate degradation; pentose phosphate pathway; D-ribose 5-phosphate from D-ribulose 5-phosphate (non-oxidative stage): step 1/1. Catalyzes the reversible conversion of ribose-5-phosphate to ribulose 5-phosphate. This Methanococcus maripaludis (strain C5 / ATCC BAA-1333) protein is Ribose-5-phosphate isomerase A.